The primary structure comprises 312 residues: MNEAPAEKQKPQQGKRFSERLPQWLRQVLPRGSVFTHTDATLKRTGLATVCEEALCPNRTHCWSRKTATYLALGDTCSRRCGFCNIDFSKNPLPPDPEEPQKIAESAKALQLKHIVLTMVARDDLEDGGASYLARIIHTLHQELPESTIEVLASDFQGNVDALHVLLDSGLTIYNHNVETVERLTPVVRHKATYRRSLFMLEQAAVYLPNLKIKSGIMVGLGEQESEVKQTLKDLADHGVRIVTIGQYLRPSRLHIPVKNYVTPETFDYYRSVGESLGLFVYAGPFVRSSFNADMVLHNLQDKQSEIAKVPR.

The segment covering 1–10 (MNEAPAEKQK) has biased composition (basic and acidic residues). Positions 1–20 (MNEAPAEKQKPQQGKRFSER) are disordered. [4Fe-4S] cluster-binding residues include Cys-51, Cys-56, Cys-62, Cys-77, Cys-81, Cys-84, and Ser-290. The Radical SAM core domain occupies 63–280 (WSRKTATYLA…RSVGESLGLF (218 aa)).

The protein belongs to the radical SAM superfamily. Lipoyl synthase family. Requires [4Fe-4S] cluster as cofactor.

Its subcellular location is the cytoplasm. The catalysed reaction is [[Fe-S] cluster scaffold protein carrying a second [4Fe-4S](2+) cluster] + N(6)-octanoyl-L-lysyl-[protein] + 2 oxidized [2Fe-2S]-[ferredoxin] + 2 S-adenosyl-L-methionine + 4 H(+) = [[Fe-S] cluster scaffold protein] + N(6)-[(R)-dihydrolipoyl]-L-lysyl-[protein] + 4 Fe(3+) + 2 hydrogen sulfide + 2 5'-deoxyadenosine + 2 L-methionine + 2 reduced [2Fe-2S]-[ferredoxin]. Its pathway is protein modification; protein lipoylation via endogenous pathway; protein N(6)-(lipoyl)lysine from octanoyl-[acyl-carrier-protein]: step 2/2. Functionally, catalyzes the radical-mediated insertion of two sulfur atoms into the C-6 and C-8 positions of the octanoyl moiety bound to the lipoyl domains of lipoate-dependent enzymes, thereby converting the octanoylated domains into lipoylated derivatives. This chain is Lipoyl synthase, found in Chlamydia felis (strain Fe/C-56) (Chlamydophila felis).